We begin with the raw amino-acid sequence, 209 residues long: Ribosomal RNA large subunit methyltransferase E (209 aa).

S-adenosyl-L-methionine-binding residues include Gly-63, Trp-65, Asp-83, Asp-99, and Asp-124. Lys-164 functions as the Proton acceptor in the catalytic mechanism.

It belongs to the class I-like SAM-binding methyltransferase superfamily. RNA methyltransferase RlmE family.

It is found in the cytoplasm. It catalyses the reaction uridine(2552) in 23S rRNA + S-adenosyl-L-methionine = 2'-O-methyluridine(2552) in 23S rRNA + S-adenosyl-L-homocysteine + H(+). Specifically methylates the uridine in position 2552 of 23S rRNA at the 2'-O position of the ribose in the fully assembled 50S ribosomal subunit. This chain is Ribosomal RNA large subunit methyltransferase E, found in Vibrio atlanticus (strain LGP32) (Vibrio splendidus (strain Mel32)).